The primary structure comprises 848 residues: DNA mismatch repair protein MutS (848 aa).

605–612 (GPNMAGKS) contributes to the ATP binding site.

It belongs to the DNA mismatch repair MutS family.

Its function is as follows. This protein is involved in the repair of mismatches in DNA. It is possible that it carries out the mismatch recognition step. This protein has a weak ATPase activity. The sequence is that of DNA mismatch repair protein MutS from Leptospira interrogans serogroup Icterohaemorrhagiae serovar Lai (strain 56601).